Consider the following 280-residue polypeptide: Shikimate dehydrogenase (NADP(+)) (280 aa).

Shikimate is bound by residues 15–17 (SMS) and Thr62. Lys66 acts as the Proton acceptor in catalysis. Glu78 lines the NADP(+) pocket. Shikimate-binding residues include Asn87 and Asp102. NADP(+) is bound by residues 127–131 (GAGGA), 151–156 (NRTLEK), and Ile219. Shikimate is bound at residue Tyr221. Gly242 serves as a coordination point for NADP(+).

Belongs to the shikimate dehydrogenase family. As to quaternary structure, homodimer.

The catalysed reaction is shikimate + NADP(+) = 3-dehydroshikimate + NADPH + H(+). It participates in metabolic intermediate biosynthesis; chorismate biosynthesis; chorismate from D-erythrose 4-phosphate and phosphoenolpyruvate: step 4/7. In terms of biological role, involved in the biosynthesis of the chorismate, which leads to the biosynthesis of aromatic amino acids. Catalyzes the reversible NADPH linked reduction of 3-dehydroshikimate (DHSA) to yield shikimate (SA). This is Shikimate dehydrogenase (NADP(+)) from Bacillus subtilis (strain 168).